Here is a 221-residue protein sequence, read N- to C-terminus: MKNVDDLIENAAELAERGLSKGEIADELNVSRETASWLVERSQPTDNSQSSSANNPTEAHDIHVDWSAVGRDSKRLTYIGQAMADLLMKEGEAVDLTIGIEKAGASLSTVVAQELDTDLGSYAPAKHQWDEGDIDELGGSFSRNFAQIRDRDCYIVDDTITSGTTMQETIDAIRDAGGRPVACVVVVDKQGVDSLADVPVYSLIDVVRVDSDTNDRDISNK.

Positions 35–59 (ASWLVERSQPTDNSQSSSANNPTEA) are disordered. Polar residues predominate over residues 42–57 (SQPTDNSQSSSANNPT).

The protein belongs to the purine/pyrimidine phosphoribosyltransferase family. GfcR subfamily.

DNA-binding transcriptional regulator that functions as a regulator of central sugar catabolic pathways. The sequence is that of Transcriptional regulator GfcR from Haloquadratum walsbyi (strain DSM 16790 / HBSQ001).